Here is a 340-residue protein sequence, read N- to C-terminus: MDSAAPALSPALTALTDQSATADLAIQIPKCPDPERYFYTSQCPDINHLRSLSILNRWLETELVFVGDEEDVSKLSEGELSFYRFLFAFLSAADDLVTENLGGLSGLFEQKDILHYYVEQECIEVVHSRVYNIIQLVLFHNNDQARREYVAGTINHPAIRAKVDWLEARVRECASVPEKFILMILIEGIFFAASFAAIAYLRTNNLLRVTCQSNDLISRDEAVHTTASCYIYNNYLGGHAKPPPDRVYGLFRQAVEIEIGFIRSQAPTDSHILSPAALAAIENYVRFSADRLLGLIHMKPLFSAPPPDASFPLSLMSTDKHTNFFECRSTSYAGAVVNDL.

Residues 180 to 200 (FILMILIEGIFFAASFAAIAY) form a helical membrane-spanning segment.

The protein belongs to the ribonucleoside diphosphate reductase small chain family. In terms of assembly, heterotetramer composed of a homodimer of the large subunit (R1) and a homodimer of the small subunit (R2). Larger multisubunit protein complex are also active, composed of (R1)n(R2)n. Fe cation is required as a cofactor.

The protein localises to the host membrane. It catalyses the reaction a 2'-deoxyribonucleoside 5'-diphosphate + [thioredoxin]-disulfide + H2O = a ribonucleoside 5'-diphosphate + [thioredoxin]-dithiol. Its function is as follows. Ribonucleoside-diphosphate reductase holoenzyme provides the precursors necessary for viral DNA synthesis. Allows virus growth in non-dividing cells, as well as reactivation from latency in infected hosts. Catalyzes the biosynthesis of deoxyribonucleotides from the corresponding ribonucleotides. The protein is Ribonucleoside-diphosphate reductase small subunit of Human herpesvirus 1 (strain 17) (HHV-1).